Reading from the N-terminus, the 182-residue chain is Putative lipoprotein LpqE (182 aa).

The first 29 residues, Met1 to Gly29, serve as a signal peptide directing secretion. The N-palmitoyl cysteine moiety is linked to residue Cys30. Cys30 carries S-diacylglycerol cysteine lipidation.

The protein localises to the cell membrane. This Mycobacterium bovis (strain ATCC BAA-935 / AF2122/97) protein is Putative lipoprotein LpqE (lpqE).